Consider the following 328-residue polypeptide: MTTSLLLHPRWPESLMYVYEDSAAESGSGGGGGGGGAGGAGGGCSGASPGKAPSMDGLGGSCPASHCRDLLPHPVLARPPAPLGAPQGAVYTDIPAPEAARQCAPPPAPPTSSSATLGYGYPFGGSYYGCRLSHNVNLQQKPCAYHPGDKYPEPSGALPGDDLSSRAKEFAFYPSFASSYQAMPGYLDVSVVPGISGHPEPRHDALIPVEGYQHWALSNGWDSQVYCSKEQSQSAHLWKSPFPDVVPLQPEVSSYRRGRKKRVPYTKVQLKELEKEYAASKFITKEKRRRISATTNLSERQVTIWFQNRRVKEKKVVSKSKAPHLHST.

The tract at residues 23-48 (AAESGSGGGGGGGGAGGAGGGCSGAS) is disordered. Gly residues predominate over residues 27 to 45 (GSGGGGGGGGAGGAGGGCS). Positions 258-317 (GRKKRVPYTKVQLKELEKEYAASKFITKEKRRRISATTNLSERQVTIWFQNRRVKEKKVV) form a DNA-binding region, homeobox.

It belongs to the Abd-B homeobox family. In terms of tissue distribution, expressed in differentiating keratinocytes. In the hair follicle lower matrix, expressed in all 3 hair shaft-forming compartments, i.e. cuticle, cortex and medulla. Expression stops sharply at the boundary with the germinal matrix compartment.

The protein localises to the nucleus. In terms of biological role, transcription factor which plays a role in hair follicle differentiation. Regulates FOXQ1 expression and that of other hair-specific genes. The chain is Homeobox protein Hox-C13 (Hoxc13) from Mus musculus (Mouse).